A 238-amino-acid polypeptide reads, in one-letter code: Accessory gene regulator A (238 aa).

Residues 2 to 125 (KIFICEDDPK…LRTRIIDCLE (124 aa)) enclose the Response regulatory domain. Aspartate 59 is modified (4-aspartylphosphate). An HTH LytTR-type domain is found at 143-238 (IELKRGSNSV…YASVRNVKKI (96 aa)).

The protein resides in the cytoplasm. In terms of biological role, required for high-level post-exponential phase expression of a series of secreted proteins. This chain is Accessory gene regulator A (agrA), found in Staphylococcus aureus (strain COL).